Here is a 448-residue protein sequence, read N- to C-terminus: Homogentisate 1,2-dioxygenase (448 aa).

His-302 serves as the catalytic Proton acceptor. 2 residues coordinate Fe cation: His-345 and Glu-351. Residues Tyr-360 and His-381 each contribute to the homogentisate site. His-381 contacts Fe cation.

Belongs to the homogentisate dioxygenase family. As to quaternary structure, hexamer; dimer of trimers. Fe cation is required as a cofactor.

It carries out the reaction homogentisate + O2 = 4-maleylacetoacetate + H(+). Its pathway is amino-acid degradation; L-phenylalanine degradation; acetoacetate and fumarate from L-phenylalanine: step 4/6. Functionally, involved in the catabolism of homogentisate (2,5-dihydroxyphenylacetate or 2,5-OH-PhAc), a central intermediate in the degradation of phenylalanine and tyrosine. Catalyzes the oxidative ring cleavage of the aromatic ring of homogentisate to yield maleylacetoacetate. In Ralstonia pickettii (strain 12J), this protein is Homogentisate 1,2-dioxygenase.